Consider the following 810-residue polypeptide: Phenylalanine--tRNA ligase beta subunit (810 aa).

In terms of domain architecture, tRNA-binding spans 40-153 (KLPDQKVIVG…EACEIGQPLA (114 aa)). One can recognise a B5 domain in the interval 399 to 480 (AAQKIVSLRP…RLYGYNNLEP (82 aa)). Residues D458, D464, E467, and E468 each contribute to the Mg(2+) site. Positions 714–808 (SKFPVVERDL…ARSELGAVIR (95 aa)) constitute an FDX-ACB domain.

Belongs to the phenylalanyl-tRNA synthetase beta subunit family. Type 1 subfamily. Tetramer of two alpha and two beta subunits. It depends on Mg(2+) as a cofactor.

Its subcellular location is the cytoplasm. The catalysed reaction is tRNA(Phe) + L-phenylalanine + ATP = L-phenylalanyl-tRNA(Phe) + AMP + diphosphate + H(+). This is Phenylalanine--tRNA ligase beta subunit from Chlorobaculum tepidum (strain ATCC 49652 / DSM 12025 / NBRC 103806 / TLS) (Chlorobium tepidum).